The primary structure comprises 476 residues: Surface membrane glycoprotein GP46/M-2 (476 aa).

The signal sequence occupies residues 1–32; the sequence is MAQCVRRLVLAAPLAAVVALLLCTSSAPVARA. Tandem repeats lie at residues 107 to 130, 131 to 154, 155 to 178, and 179 to 202. The tract at residues 107–202 is 4 X 24 AA tandem repeats; it reads VMILALDFGA…FCGCVPDSWR (96 aa). Disordered regions lie at residues 231-255 and 348-370; these read APGT…PSPG and ALSP…RRRA. Cys-452 carries the GPI-anchor amidated cysteine lipid modification. Residues 453–476 constitute a propeptide, removed in mature form; that stretch reads PALFDGARLRCCALVVCAGAAPAG.

The protein localises to the cell membrane. This chain is Surface membrane glycoprotein GP46/M-2, found in Leishmania amazonensis.